A 560-amino-acid chain; its full sequence is Probable sulfate transporter Rv1739c (560 aa).

The interval 1-436 (MIPTMTSAGW…VLGFVPGIAG (436 aa)) is required for sulfate transport in E.coli. The next 11 membrane-spanning stretches (helical) occupy residues 29 to 49 (VLAGLTVAAYLIPQAMAYATV), 51 to 71 (GLPPAAGLWASIAPLAIYALL), 79 to 99 (IGPESATALMTAAVLAPMAAG), 105 to 125 (AVLAATLGLLVGLICLLAGTA), 138 to 158 (VLVGYMAGIALVMISSQLGTI), 184 to 204 (WPTFVLAMSVLALLTMLTRWA), 207 to 227 (APGPIIAVLAATMLVAVMSLD), 256 to 276 (ALIIPAAGIAIVTFTDGVLTA), 333 to 353 (LIALGLVVIVMVFASGLLAMF), 355 to 375 (IAALGALVVYAALRLIDLSEF), and 394 to 414 (AAVLGLGVFYGVLAAVALSIL). In terms of domain architecture, STAS spans 442–557 (DYPQAKRVPG…MTLPTAVQAF (116 aa)).

This sequence belongs to the SLC26A/SulP transporter (TC 2.A.53) family.

It localises to the cell membrane. Functionally, expression in E.coli induces sulfate uptake during early- to mid-log phase growth. Uptake is maximal at pH 6.0, is sulfate-specific, requires E.coli CysA and the transmembrane segment but not the STAS domain of the protein. The sequence is that of Probable sulfate transporter Rv1739c from Mycobacterium tuberculosis (strain ATCC 25618 / H37Rv).